An 81-amino-acid chain; its full sequence is Adipogenin (81 aa).

The chain crosses the membrane as a helical span at residues 16–36; the sequence is FLVFWLCLPVALLLFLLIIWL.

This sequence belongs to the adipogenin family. As to expression, highly expressed in subcutaneous, perirenal and mesecentric adipose tissue.

The protein resides in the membrane. It localises to the nucleus. In terms of biological role, plays a role in stimulating adipocyte differentiation and development. The polypeptide is Adipogenin (Bos taurus (Bovine)).